Here is a 247-residue protein sequence, read N- to C-terminus: Probable transcriptional regulatory protein ETA_14870 (247 aa).

Residues 1–20 (MAGHSKWANTKHRKAAQDAK) form a disordered region.

It belongs to the TACO1 family.

Its subcellular location is the cytoplasm. The polypeptide is Probable transcriptional regulatory protein ETA_14870 (Erwinia tasmaniensis (strain DSM 17950 / CFBP 7177 / CIP 109463 / NCPPB 4357 / Et1/99)).